The sequence spans 292 residues: Elongation factor Ts (292 aa).

The tract at residues 79 to 82 (TDFV) is involved in Mg(2+) ion dislocation from EF-Tu.

The protein belongs to the EF-Ts family.

It is found in the cytoplasm. Associates with the EF-Tu.GDP complex and induces the exchange of GDP to GTP. It remains bound to the aminoacyl-tRNA.EF-Tu.GTP complex up to the GTP hydrolysis stage on the ribosome. In Staphylococcus epidermidis (strain ATCC 12228 / FDA PCI 1200), this protein is Elongation factor Ts.